A 332-amino-acid chain; its full sequence is Putative ankyrin repeat protein R896 (332 aa).

ANK repeat units follow at residues 159 to 188 (GNDN…NVKS), 190 to 218 (DNCA…NVKA), 219 to 248 (DGNY…DIKA), 249 to 278 (AQNL…NIST), and 280 to 308 (NDYV…DIFS).

This is Putative ankyrin repeat protein R896 from Acanthamoeba polyphaga mimivirus (APMV).